The following is a 144-amino-acid chain: MDLNKYVQEVSLQDFGKEFRHVAIWNRRLRSTGGRFFPRDGHLDFNPKHLEEQGLEVFRKIVRHELCHYHLYFEKKGYRHGDRDFKELLAAVDGLRYAPQLEQATKPSLIYCCQSCGQVYQRKRRIDLKKYRCGKCRGKLTLKE.

Residues Asn-4–Lys-143 form the SprT-like domain. Position 64 (His-64) interacts with Zn(2+). Glu-65 is an active-site residue. Zn(2+) is bound at residue His-68.

Belongs to the SprT family. Zn(2+) serves as cofactor.

It localises to the cytoplasm. This chain is Protein SprT-like, found in Streptococcus suis (strain 98HAH33).